The following is a 173-amino-acid chain: Shikimate kinase (173 aa).

Residue 10–15 (GSGKTT) coordinates ATP. A Mg(2+)-binding site is contributed by Thr-14. 3 residues coordinate substrate: Asp-32, Arg-56, and Gly-78. Arg-117 is a binding site for ATP. Arg-135 is a binding site for substrate.

The protein belongs to the shikimate kinase family. Monomer. It depends on Mg(2+) as a cofactor.

It is found in the cytoplasm. The enzyme catalyses shikimate + ATP = 3-phosphoshikimate + ADP + H(+). The protein operates within metabolic intermediate biosynthesis; chorismate biosynthesis; chorismate from D-erythrose 4-phosphate and phosphoenolpyruvate: step 5/7. Its function is as follows. Catalyzes the specific phosphorylation of the 3-hydroxyl group of shikimic acid using ATP as a cosubstrate. This Limosilactobacillus fermentum (strain NBRC 3956 / LMG 18251) (Lactobacillus fermentum) protein is Shikimate kinase.